The following is a 543-amino-acid chain: Chaperonin GroEL 7 (543 aa).

ATP-binding positions include 30 to 33, K51, 87 to 91, G415, and D496; these read TLGP and DGTTT.

It belongs to the chaperonin (HSP60) family. Forms a cylinder of 14 subunits composed of two heptameric rings stacked back-to-back. Interacts with the co-chaperonin GroES.

Its subcellular location is the cytoplasm. The catalysed reaction is ATP + H2O + a folded polypeptide = ADP + phosphate + an unfolded polypeptide.. Its function is as follows. Together with its co-chaperonin GroES, plays an essential role in assisting protein folding. The GroEL-GroES system forms a nano-cage that allows encapsulation of the non-native substrate proteins and provides a physical environment optimized to promote and accelerate protein folding. The sequence is that of Chaperonin GroEL 7 from Bradyrhizobium diazoefficiens (strain JCM 10833 / BCRC 13528 / IAM 13628 / NBRC 14792 / USDA 110).